A 436-amino-acid polypeptide reads, in one-letter code: Mitochondrial substrate carrier family protein Y (436 aa).

A disordered region spans residues 1–102 (MENNNKNINT…NINNNNINKK (102 aa)). Over 1–137 (MENNNKNINT…GGFLAGLSRN (137 aa)) the chain is Mitochondrial intermembrane. Solcar repeat units follow at residues 135-226 (SRNV…TLKY) and 236-334 (HDTL…LKKQ). Residues 138-158 (VTRIIGSFSSGMAEESAGYPL) form a helical membrane-spanning segment. At 159–194 (DLIKTRIQLSQSGVSGGGGTNTSIIKIFKDVIKTEG) the chain is on the mitochondrial matrix side. The helical transmembrane segment at 195 to 215 (VIGLFKGLSSPLILSALVTAI) threads the bilayer. The Mitochondrial intermembrane segment spans residues 216 to 238 (QFGLFEDTLKYFRKHQYFKNHDT). The chain crosses the membrane as a helical span at residues 239–259 (LSLLFSGSIAGFAQSFITCPV). At 260 to 313 (DLVKIQMQIQGIPSSQPNSNNNNNNNKAKGNSYFTKLIYREKGLLGFYQGLSPT) the chain is on the mitochondrial matrix side. A helical membrane pass occupies residues 314 to 334 (LFRDVPGLAIFFTTYETLKKQ). Topologically, residues 335–347 (FGQPELSTQSPTE) are mitochondrial intermembrane. Residues 348–368 (FIKSFIPIVLSGGSAGVFYHG) traverse the membrane as a helical segment. The stretch at 350 to 436 (KSFIPIVLSG…FLVYEMVINL (87 aa)) is one Solcar 3 repeat. Residues 369 to 413 (LTHPFDIAKTLIQSDRSATKYKGTFDCLKQVYQNQGPKSLFKGFS) are Mitochondrial matrix-facing. A helical transmembrane segment spans residues 414 to 434 (AVAIKSFQSNAVGFLVYEMVI). Over 435–436 (NL) the chain is Mitochondrial intermembrane.

The protein belongs to the mitochondrial carrier (TC 2.A.29) family.

Its subcellular location is the mitochondrion inner membrane. Its function is as follows. Mitochondrial solute carriers shuttle metabolites, nucleotides, and cofactors through the mitochondrial inner membrane. The chain is Mitochondrial substrate carrier family protein Y (mcfY) from Dictyostelium discoideum (Social amoeba).